The following is a 561-amino-acid chain: Melanopsin-A (561 aa).

The Extracellular segment spans residues methionine 1–alanine 34. A helical membrane pass occupies residues phenylalanine 35–phenylalanine 55. The Cytoplasmic portion of the chain corresponds to tyrosine 56–phenylalanine 68. A helical membrane pass occupies residues isoleucine 69 to isoleucine 89. Residues asparagine 90–lysine 104 lie on the Extracellular side of the membrane. The cysteines at positions 103 and 181 are disulfide-linked. Residues leucine 105 to serine 125 form a helical membrane-spanning segment. Residues leucine 126–threonine 148 lie on the Cytoplasmic side of the membrane. Residues isoleucine 149 to tryptophan 169 form a helical membrane-spanning segment. Topologically, residues serine 170–cysteine 201 are extracellular. Asparagine 192 carries an N-linked (GlcNAc...) asparagine glycan. Residues phenylalanine 202–isoleucine 222 form a helical membrane-spanning segment. Residues arginine 223–lysine 255 are Cytoplasmic-facing. Residues isoleucine 256 to methionine 276 form a helical membrane-spanning segment. At isoleucine 277–lysine 291 the chain is on the extracellular side. The chain crosses the membrane as a helical span at residues threonine 292–isoleucine 312. N6-(retinylidene)lysine is present on lysine 299. Topologically, residues histidine 313–valine 561 are cytoplasmic. Disordered stretches follow at residues alanine 359 to serine 385, alanine 404 to histidine 448, asparagine 479 to alanine 503, and serine 539 to valine 561. Low complexity predominate over residues alanine 371–serine 385. Residues valine 550–valine 561 are compositionally biased toward acidic residues.

Belongs to the G-protein coupled receptor 1 family. Opsin subfamily. In terms of tissue distribution, expressed in retina and brain. Expressed in a subset of retinal horizontal cells as well as a small number of amacrine and retinal ganglion cells. Also expressed in a small population of neurons in the suprachiasmatic nucleus (SNC).

It is found in the cell membrane. Functionally, photoreceptor implicated in non-image-forming responses to light. The polypeptide is Melanopsin-A (opn4a) (Gadus morhua (Atlantic cod)).